A 65-amino-acid chain; its full sequence is Protein translocase subunit SecE (65 aa).

Residues 1 to 27 lie on the Cytoplasmic side of the membrane; that stretch reads MEKLKEFLKGVRDELKRVVWPSRELVV. Residues 28 to 59 traverse the membrane as a helical segment; sequence KATISVIIFSLAIGVYLWILDLTFTKIISFIL. Residues 60 to 65 are Periplasmic-facing; the sequence is SLRGSL.

This sequence belongs to the SecE/SEC61-gamma family. As to quaternary structure, component of the Sec protein translocase complex. Heterotrimer consisting of SecY, SecE and SecG subunits. The heterotrimers can form oligomers, although 1 heterotrimer is thought to be able to translocate proteins. Interacts with SecDF, and other proteins may be involved. The channel interacts with SecA via subunit SecY.

The protein localises to the cell inner membrane. In terms of biological role, essential subunit of the protein translocation channel SecYEG. Clamps together the 2 halves of SecY. May contact the channel plug during translocation. The sequence is that of Protein translocase subunit SecE from Aquifex aeolicus (strain VF5).